The following is a 1320-amino-acid chain: Clustered mitochondria protein homolog (1320 aa).

Disordered regions lie at residues 166-241 (QQLE…KQKM), 552-582 (YGSMDTPTNEEEEQQQKEENEENKNNNTKSI), and 683-708 (LKEKEERQKKEGIDPPTATARDEDVQ). Positions 185 to 194 (TEDKEEKETI) are enriched in basic and acidic residues. A compositionally biased stretch (basic residues) spans 202 to 213 (KKNKHHNKKGNK). Basic and acidic residues-rich tracts occupy residues 226–241 (NEEKLTPQQKERKQKM), 565–575 (QQQKEENEENK), and 683–695 (LKEKEERQKKEGI). One can recognise a Clu domain in the interval 379 to 649 (KTNRYDINKG…KATPRDPNYT (271 aa)). 5 TPR repeats span residues 955 to 988 (GLDLLEAGKTFFNQRKYELATELLGEALAIYHQV), 997 to 1030 (GACFTHLAMLAYQNEQYDLAIEYQKNALVITEKT), 1039 to 1072 (VQAYTTLAVFCQRSGRYNESIGYMKHVLYLTDLL), 1081 to 1114 (ASIYTAIAAILEDTERFDLALEFLKQTLKHQEFL), and 1123 to 1156 (STTYHKMAIVCARATNFDDSIIHQKKSTDILEKE). The segment at 1204 to 1320 (KADQFKKSQP…SKPNKKSSKN (117 aa)) is disordered. A compositionally biased stretch (basic residues) spans 1237 to 1247 (KPKKSQSKKSK). Residues 1248 to 1311 (STNTTTTTNT…PTSSSAADSS (64 aa)) show a composition bias toward low complexity.

Belongs to the CLU family.

It is found in the cytoplasm. Its function is as follows. mRNA-binding protein involved in proper cytoplasmic distribution of mitochondria. In Dictyostelium discoideum (Social amoeba), this protein is Clustered mitochondria protein homolog.